Here is a 398-residue protein sequence, read N- to C-terminus: MDTKAFKRALHQSDRYNRKGFGKTTDVSGALESAYQSDLIQSLRQNGYRLQRGEITIRLAEAFGFCWGVERAVAIAYETRQHFPQERIWITNEIIHNPSVNQHLREMSVEFIPCERGEKDFSVVDRGDVVILPAFGASVQEMQLLDEKGCHIVDTTCPWVSKVWNTVEKHKRGAHTSIIHGKYNHEETVATSSFAETYLVVLNLEQAQYVCDYILNGGDRDEFMTRFGKACSAGFDPDRDLERIGIANQTTMLKSETEAIGKLFERTLLKKYGPQALNDHFLAFNTICDATQERQDAMFQLVEEPLDLIVVIGGFNSSNTTHLQEIAIERQIPSFHIDAAERIGPGNRIEHKPLHTDLTTTEPWLPAGPLTIGITSGASTPDKVVEDVIERLFDLQRS.

Cys-66 contacts [4Fe-4S] cluster. His-96 contacts (2E)-4-hydroxy-3-methylbut-2-enyl diphosphate. His-96 is a dimethylallyl diphosphate binding site. His-96 lines the isopentenyl diphosphate pocket. Cys-157 contributes to the [4Fe-4S] cluster binding site. His-185 is a (2E)-4-hydroxy-3-methylbut-2-enyl diphosphate binding site. His-185 is a binding site for dimethylallyl diphosphate. An isopentenyl diphosphate-binding site is contributed by His-185. The Proton donor role is filled by Glu-187. Residue Thr-250 coordinates (2E)-4-hydroxy-3-methylbut-2-enyl diphosphate. Cys-288 is a [4Fe-4S] cluster binding site. (2E)-4-hydroxy-3-methylbut-2-enyl diphosphate contacts are provided by Ser-317, Ser-318, Asn-319, and Ser-379. Dimethylallyl diphosphate is bound by residues Ser-317, Ser-318, Asn-319, and Ser-379. 4 residues coordinate isopentenyl diphosphate: Ser-317, Ser-318, Asn-319, and Ser-379.

It belongs to the IspH family. Requires [4Fe-4S] cluster as cofactor.

It catalyses the reaction isopentenyl diphosphate + 2 oxidized [2Fe-2S]-[ferredoxin] + H2O = (2E)-4-hydroxy-3-methylbut-2-enyl diphosphate + 2 reduced [2Fe-2S]-[ferredoxin] + 2 H(+). The enzyme catalyses dimethylallyl diphosphate + 2 oxidized [2Fe-2S]-[ferredoxin] + H2O = (2E)-4-hydroxy-3-methylbut-2-enyl diphosphate + 2 reduced [2Fe-2S]-[ferredoxin] + 2 H(+). It functions in the pathway isoprenoid biosynthesis; dimethylallyl diphosphate biosynthesis; dimethylallyl diphosphate from (2E)-4-hydroxy-3-methylbutenyl diphosphate: step 1/1. Its pathway is isoprenoid biosynthesis; isopentenyl diphosphate biosynthesis via DXP pathway; isopentenyl diphosphate from 1-deoxy-D-xylulose 5-phosphate: step 6/6. Functionally, catalyzes the conversion of 1-hydroxy-2-methyl-2-(E)-butenyl 4-diphosphate (HMBPP) into a mixture of isopentenyl diphosphate (IPP) and dimethylallyl diphosphate (DMAPP). Acts in the terminal step of the DOXP/MEP pathway for isoprenoid precursor biosynthesis. This Synechococcus sp. (strain ATCC 27144 / PCC 6301 / SAUG 1402/1) (Anacystis nidulans) protein is 4-hydroxy-3-methylbut-2-enyl diphosphate reductase.